Reading from the N-terminus, the 850-residue chain is Polyhomeotic-like protein 2 (850 aa).

Disordered regions lie at residues 1–79 (MENE…QYLQ), 233–314 (QQTP…RAVP), 335–386 (LPQP…DHAL), 402–436 (THVHKPGNSQQCHLPTLDTGSQNGHPEGGSHPPQR), and 528–553 (MTSGNGNSASSIAGTAPQNGENKPPQ). Residues 15-32 (SVTTNTSGTNSSSGCISS) show a composition bias toward low complexity. The segment at 33-56 (SGGGGGSGGRPTAPQISVYSGIPD) is interaction with BMI1. A compositionally biased stretch (low complexity) spans 343–352 (PQPQFVAQQQ). Composition is skewed to polar residues over residues 368 to 380 (LASVSPSLALQSS) and 402 to 425 (THVHKPGNSQQCHLPTLDTGSQNG). A compositionally biased stretch (low complexity) spans 529-543 (TSGNGNSASSIAGTA). The HD1 signature appears at 550-579 (KPPQAIVKPQILTHVIEGFVIQEGAEPFPV). Residues Lys590 and Lys592 each participate in a glycyl lysine isopeptide (Lys-Gly) (interchain with G-Cter in SUMO2) cross-link. Positions 597-624 (FLPEKPPQQDHTTTTDSEMEEPYLQESK) are disordered. Phosphothreonine is present on Thr611. Phosphoserine is present on Ser613. Residue Lys624 forms a Glycyl lysine isopeptide (Lys-Gly) (interchain with G-Cter in SUMO2) linkage. The FCS-type zinc finger occupies 625 to 659 (EEGTPLKLKCELCGRVDFAYKFKRSKRFCSMACAK). Positions 634, 637, 653, and 657 each coordinate Zn(2+). 2 disordered regions span residues 676–712 (RSKLQKAGTTTHNRRRASKASLPTLTKDTKKQPSGTV) and 725–764 (SQEDSSRCSDNSSYEEPLSPISASSSTSRRRQGQRDLDLP). Lys694 participates in a covalent cross-link: Glycyl lysine isopeptide (Lys-Gly) (interchain with G-Cter in SUMO2). A compositionally biased stretch (polar residues) spans 696–712 (SLPTLTKDTKKQPSGTV). Phosphoserine is present on Ser743. Residues 786-850 (WNVEDVYEFI…YARISMLKDS (65 aa)) form the SAM domain. Residue Lys839 forms a Glycyl lysine isopeptide (Lys-Gly) (interchain with G-Cter in SUMO2) linkage.

In terms of assembly, component of a PRC1-like complex. Interacts with CBX4. Interacts with BMI1, PCGF2, PHC1 and RNF2. Interacts with CHTOP. Interacts with the N-terminal region of the SP1 transcription factor and with MAPKAPK2. Interacts with SAMD7. Interacts with SAMD11. As to expression, isoform 2 is ubiquitously expressed in embryos and adult tissues at much higher level than isoform 1.

It is found in the nucleus. In terms of biological role, component of a Polycomb group (PcG) multiprotein PRC1-like complex, a complex class required to maintain the transcriptionally repressive state of many genes, including Hox genes, throughout development. PcG PRC1 complex acts via chromatin remodeling and modification of histones; it mediates monoubiquitination of histone H2A 'Lys-119', rendering chromatin heritably changed in its expressibility. The chain is Polyhomeotic-like protein 2 (Phc2) from Mus musculus (Mouse).